Reading from the N-terminus, the 388-residue chain is Pectin acetylesterase 1 (388 aa).

Residues 1–24 (MKTLLYWGWSSLAGLILFSILAHG) form the signal peptide. N-linked (GlcNAc...) asparagine glycans are attached at residues Asn-30 and Asn-33. Catalysis depends on charge relay system residues Ser-187 and Asp-283. Asn-304 carries an N-linked (GlcNAc...) asparagine glycan. Residue His-349 is the Charge relay system of the active site.

This sequence belongs to the pectinacetylesterase family.

The protein resides in the secreted. The protein localises to the cell wall. Hydrolyzes acetyl esters in homogalacturonan regions of pectin. In type I primary cell wall, galacturonic acid residues of pectin can be acetylated at the O-2 and O-3 positions. Decreasing the degree of acetylation of pectin gels in vitro alters their physical properties. The polypeptide is Pectin acetylesterase 1 (Arabidopsis thaliana (Mouse-ear cress)).